The sequence spans 469 residues: Phosphoenolpyruvate carboxylase (469 aa).

It belongs to the PEPCase type 2 family. Homotetramer. It depends on Mg(2+) as a cofactor.

The catalysed reaction is oxaloacetate + phosphate = phosphoenolpyruvate + hydrogencarbonate. Its function is as follows. Catalyzes the irreversible beta-carboxylation of phosphoenolpyruvate (PEP) to form oxaloacetate (OAA), a four-carbon dicarboxylic acid source for the tricarboxylic acid cycle. In Pyrococcus horikoshii (strain ATCC 700860 / DSM 12428 / JCM 9974 / NBRC 100139 / OT-3), this protein is Phosphoenolpyruvate carboxylase.